The primary structure comprises 466 residues: UDP-N-acetylmuramate--L-alanine ligase (466 aa).

An ATP-binding site is contributed by 117 to 123 (GTHGKTT).

It belongs to the MurCDEF family.

It localises to the cytoplasm. It carries out the reaction UDP-N-acetyl-alpha-D-muramate + L-alanine + ATP = UDP-N-acetyl-alpha-D-muramoyl-L-alanine + ADP + phosphate + H(+). It participates in cell wall biogenesis; peptidoglycan biosynthesis. Its function is as follows. Cell wall formation. The chain is UDP-N-acetylmuramate--L-alanine ligase from Streptomyces griseus subsp. griseus (strain JCM 4626 / CBS 651.72 / NBRC 13350 / KCC S-0626 / ISP 5235).